A 712-amino-acid chain; its full sequence is Dynein regulatory complex protein 1 (712 aa).

The interval 1–34 is disordered; sequence MNPPGSLGVLEEKEEEHLAPPILGPSIHSDNPQE. A coiled-coil region spans residues 100-388; the sequence is AADIREIHRR…QFKELQKAMR (289 aa). The segment at 557–591 is disordered; it reads HSPSSQEPLDLRAEKERSLVDGKSQEKEPPPSPKL. Over residues 565–585 the composition is skewed to basic and acidic residues; the sequence is LDLRAEKERSLVDGKSQEKEP. The stretch at 663 to 698 forms a coiled coil; the sequence is LTQRAELLIENSSLERQNTELQQLLQQYLDTKINSE.

It belongs to the DRC1 family. As to quaternary structure, component of the nexin-dynein regulatory complex (N-DRC). Interacts with CCDC65/DRC2, DRC3, GAS8/DRC4 and TCTE1/DRC5.

It localises to the cytoplasm. It is found in the cytoskeleton. The protein resides in the cilium axoneme. The protein localises to the flagellum axoneme. In terms of biological role, component of the nexin-dynein regulatory complex (N-DRC) a key regulator of ciliary/flagellar motility which maintains the alignment and integrity of the distal axoneme and regulates microtubule sliding in motile axonemes. Plays a critical role in the assembly of N-DRC and also stabilizes the assembly of multiple inner dynein arms and radial spokes. Coassembles with CCDC65/DRC2 to form a central scaffold needed for assembly of the N-DRC and its attachment to the outer doublet microtubules. The chain is Dynein regulatory complex protein 1 (DRC1) from Bos taurus (Bovine).